Reading from the N-terminus, the 99-residue chain is U1-theraphotoxin-Lsp1a (99 aa).

Positions 1-23 are cleaved as a signal peptide; that stretch reads MRSLTLAALLLCSLLLVFHTSAA. A propeptide spanning residues 24-50 is cleaved from the precursor; it reads AELEAQEGHLMIPGDTDTALETVDDER. 4 disulfides stabilise this stretch: C54–C67, C58–C91, C72–C74, and C85–C96.

The protein belongs to the neurotoxin 12 (Hwtx-2) family. 04 (lasiotoxin) subfamily. As to expression, expressed by the venom gland.

Its subcellular location is the secreted. Toxin that causes irreversible contractile paralysis into adult Aedes aegypti resulting in 100% mortality after 24 hours. The protein is U1-theraphotoxin-Lsp1a of Lasiodora sp. (strain IBSP 8539) (Brazilian salmon pink birdeater).